Consider the following 494-residue polypeptide: Cobyric acid synthase (494 aa).

The GATase cobBQ-type domain maps to 254 to 453 (KQTVAVIAYP…LHGLFEDPGA (200 aa)). Cys338 acts as the Nucleophile in catalysis. His445 is a catalytic residue.

This sequence belongs to the CobB/CobQ family. CobQ subfamily.

Its pathway is cofactor biosynthesis; adenosylcobalamin biosynthesis. Catalyzes amidations at positions B, D, E, and G on adenosylcobyrinic A,C-diamide. NH(2) groups are provided by glutamine, and one molecule of ATP is hydrogenolyzed for each amidation. This is Cobyric acid synthase from Albidiferax ferrireducens (strain ATCC BAA-621 / DSM 15236 / T118) (Rhodoferax ferrireducens).